The sequence spans 319 residues: GTP cyclohydrolase MptA (319 aa).

This sequence belongs to the GTP cyclohydrolase IV family. Homodimer. Fe(2+) serves as cofactor.

It catalyses the reaction GTP + H2O = 7,8-dihydroneopterin 2',3'-cyclic phosphate + formate + diphosphate + H(+). It functions in the pathway cofactor biosynthesis; 5,6,7,8-tetrahydromethanopterin biosynthesis. Converts GTP to 7,8-dihydro-D-neopterin 2',3'-cyclic phosphate, the first intermediate in the biosynthesis of coenzyme methanopterin. In Methanosarcina barkeri (strain Fusaro / DSM 804), this protein is GTP cyclohydrolase MptA.